The chain runs to 223 residues: MAEHADTQSLLRLVTWLSPAFPVGSFSYSGGLEQAIHDRLVTGADDLRLWCETLLDHGTTWNDALLLAEGYRACDDAARLIAASELAEALAGSREWHMETMLLGEAFLAAAGHWPHASLEFPGARAAYPVAVGAVAGAHRTGLEAALAAFLNATISNAVSVAIRCGVTGQRDGVGMLARMEKTIGAVATRATRASLDDLGAATIIADIASLRHEILHSRLFRT.

It belongs to the UreF family. UreD, UreF and UreG form a complex that acts as a GTP-hydrolysis-dependent molecular chaperone, activating the urease apoprotein by helping to assemble the nickel containing metallocenter of UreC. The UreE protein probably delivers the nickel.

It localises to the cytoplasm. Its function is as follows. Required for maturation of urease via the functional incorporation of the urease nickel metallocenter. The chain is Urease accessory protein UreF from Rhizobium meliloti (strain 1021) (Ensifer meliloti).